The sequence spans 376 residues: Transcription initiation factor IIA subunit 1 (376 aa).

At Ala-2 the chain carries N-acetylalanine. Low complexity-rich tracts occupy residues 69–79 (QVQQQHQPQQQ) and 89–105 (QAQPQQTVPQQAQTQQV). 3 disordered regions span residues 69 to 107 (QVQQQHQPQQQQHHHHHHHQQAQPQQTVPQQAQTQQVLI), 246 to 265 (AQAQITATGHQQPQAQPAQT), and 274 to 329 (DGTG…QELF). A phosphoserine; by TAF1 mark is found at Ser-280, Ser-281, Ser-316, and Ser-321. Positions 280-329 (SSEEDEDEEEDYDDDEEEDKEKDGAEDGQVEEEPLNSEDDVSDEEGQELF) are enriched in acidic residues. The DNA site is built by His-343 and Arg-344.

This sequence belongs to the TFIIA subunit 1 family. As to quaternary structure, TFIIA is a heterodimer of the large unprocessed subunit 1 and a small subunit gamma. It was originally believed to be a heterotrimer of an alpha (p35), a beta (p19) and a gamma subunit (p12). TFIIA forms a complex with TBP. Part of TBP-based Pol II pre-initiation complex (PIC), in which Pol II core assembles with general transcription factors and other specific initiation factors including GTF2E1, GTF2E2, GTF2F1, GTF2F2, TCEA1, ERCC2, ERCC3, GTF2H2, GTF2H3, GTF2H4, GTF2H5, GTF2A1, GTF2A2, GTF2B and TBP; this large multi-subunit PIC complex mediates DNA unwinding and targets Pol II core to the transcription start site where the first phosphodiester bond forms. The alpha and beta subunits are postranslationally produced from the precursor formby TASP1. The cleavage promotes proteasomal degradation.

It localises to the nucleus. Functionally, TFIIA is a component of the transcription machinery of RNA polymerase II and plays an important role in transcriptional activation. TFIIA in a complex with TBP mediates transcriptional activity. The sequence is that of Transcription initiation factor IIA subunit 1 (GTF2A1) from Pongo abelii (Sumatran orangutan).